The sequence spans 420 residues: ATP phosphoribosyltransferase regulatory subunit (420 aa).

The protein belongs to the class-II aminoacyl-tRNA synthetase family. HisZ subfamily. In terms of assembly, heteromultimer composed of HisG and HisZ subunits.

The protein localises to the cytoplasm. It functions in the pathway amino-acid biosynthesis; L-histidine biosynthesis; L-histidine from 5-phospho-alpha-D-ribose 1-diphosphate: step 1/9. Functionally, required for the first step of histidine biosynthesis. May allow the feedback regulation of ATP phosphoribosyltransferase activity by histidine. This Bacillus cereus (strain ATCC 10987 / NRS 248) protein is ATP phosphoribosyltransferase regulatory subunit.